The primary structure comprises 147 residues: Small ribosomal subunit protein uS12 (147 aa).

Belongs to the universal ribosomal protein uS12 family. As to quaternary structure, part of the 30S ribosomal subunit.

In terms of biological role, with S4 and S5 plays an important role in translational accuracy. Located at the interface of the 30S and 50S subunits. In Methanococcus aeolicus (strain ATCC BAA-1280 / DSM 17508 / OCM 812 / Nankai-3), this protein is Small ribosomal subunit protein uS12.